Here is an 895-residue protein sequence, read N- to C-terminus: La RNA-binding domain-containing protein LHP1 (895 aa).

Disordered regions lie at residues 24-265 (ANGN…PPPS), 285-344 (SATS…HDAT), 359-590 (GEDK…LGHG), 796-857 (PDAA…AQDV), and 870-895 (VNGEIKEKEEVKAMENEGEESENYEQ). The segment covering 31–75 (SSPSSSSSATPEPTSLSSSTSGKKAFSTATSKSGQQKQGSSPQPG) has biased composition (low complexity). Residues 95 to 143 (QRTDRSEEKEKRGSSSKNWRERSHRDEKNQDDGEKRNGRERSKKEKGDK) show a composition bias toward basic and acidic residues. Residues 152–170 (SATSSEKTAKSLSSSTKNA) are compositionally biased toward low complexity. Composition is skewed to polar residues over residues 172-184 (GVTSSSQGENPIA) and 192-216 (KAQNDSTFRSSSAAAPVGPTTSTIN). Over residues 228–244 (DNWRARPAKVEKNEKTE) the composition is skewed to basic and acidic residues. The segment covering 251 to 260 (QAQPQPQRQL) has biased composition (low complexity). Residues 296–314 (KSDKEKSLTNGMVKEEDSG) are compositionally biased toward basic and acidic residues. Low complexity predominate over residues 325–336 (AAAAAAAGTSST). Composition is skewed to basic and acidic residues over residues 359-371 (GEDKKEKAKERLN), 405-428 (HAAEQSRRQNRMEAKKRSSGREGG), 452-468 (EGKKARKEGAQQKDGHA), and 485-495 (GDVKETKEGDA). A compositionally biased stretch (low complexity) spans 496-508 (RSASQQESSSHRS). The span at 510–521 (PSISASANTGID) shows a compositional bias: polar residues. A compositionally biased stretch (gly residues) spans 563–572 (RGSFGGGRAR). Positions 706 to 796 (VPNLDPLRFY…GAESHRWVLP (91 aa)) constitute an HTH La-type RNA-binding domain. Phosphoserine is present on Ser847. Basic and acidic residues predominate over residues 873–884 (EIKEKEEVKAME). The span at 885 to 895 (NEGEESENYEQ) shows a compositional bias: acidic residues.

May act as an RNA-binding protein. The polypeptide is La RNA-binding domain-containing protein LHP1 (Cryptococcus neoformans var. grubii serotype A (strain H99 / ATCC 208821 / CBS 10515 / FGSC 9487) (Filobasidiella neoformans var. grubii)).